Here is a 511-residue protein sequence, read N- to C-terminus: Pancreatic alpha-amylase (511 aa).

The signal sequence occupies residues Met1–Ala15. Gln16 carries the post-translational modification Pyrrolidone carboxylic acid. Intrachain disulfides connect Cys43/Cys101, Cys85/Cys130, and Cys156/Cys175. Ca(2+) contacts are provided by Asn115, Arg173, and Asp182. Residue Arg210 participates in chloride binding. Catalysis depends on Asp212, which acts as the Nucleophile. Position 216 (His216) interacts with Ca(2+). Glu248 functions as the Proton donor in the catalytic mechanism. Chloride-binding residues include Asn313 and Arg352. Cystine bridges form between Cys393–Cys399 and Cys465–Cys477. Asn476 carries N-linked (GlcNAc...) asparagine glycosylation.

It belongs to the glycosyl hydrolase 13 family. In terms of assembly, monomer. Binds to the sea anemone inhibitor helianthamide. Ca(2+) is required as a cofactor. Requires chloride as cofactor. Detected in pancreas (at protein level).

The protein resides in the secreted. It localises to the extracellular space. The enzyme catalyses Endohydrolysis of (1-&gt;4)-alpha-D-glucosidic linkages in polysaccharides containing three or more (1-&gt;4)-alpha-linked D-glucose units.. In Homo sapiens (Human), this protein is Pancreatic alpha-amylase (AMY2A).